The primary structure comprises 195 residues: Phosphoheptose isomerase (195 aa).

Residues Leu-36 to Glu-195 enclose the SIS domain. Asn-51–Gly-53 contributes to the substrate binding site. His-60 and Glu-64 together coordinate Zn(2+). Substrate contacts are provided by residues Glu-64, Asn-93–Asp-94, Ser-119–Ser-121, Ser-124, and Gln-174. Residues Gln-174 and His-182 each coordinate Zn(2+).

It belongs to the SIS family. GmhA subfamily. Homotetramer. It depends on Zn(2+) as a cofactor.

Its subcellular location is the cytoplasm. The enzyme catalyses 2 D-sedoheptulose 7-phosphate = D-glycero-alpha-D-manno-heptose 7-phosphate + D-glycero-beta-D-manno-heptose 7-phosphate. It functions in the pathway carbohydrate biosynthesis; D-glycero-D-manno-heptose 7-phosphate biosynthesis; D-glycero-alpha-D-manno-heptose 7-phosphate and D-glycero-beta-D-manno-heptose 7-phosphate from sedoheptulose 7-phosphate: step 1/1. Catalyzes the isomerization of sedoheptulose 7-phosphate in D-glycero-D-manno-heptose 7-phosphate. The protein is Phosphoheptose isomerase of Methylococcus capsulatus (strain ATCC 33009 / NCIMB 11132 / Bath).